Reading from the N-terminus, the 347-residue chain is Histidinol-phosphate aminotransferase (347 aa).

K209 is subject to N6-(pyridoxal phosphate)lysine.

The protein belongs to the class-II pyridoxal-phosphate-dependent aminotransferase family. Histidinol-phosphate aminotransferase subfamily. As to quaternary structure, homodimer. Pyridoxal 5'-phosphate serves as cofactor.

It catalyses the reaction L-histidinol phosphate + 2-oxoglutarate = 3-(imidazol-4-yl)-2-oxopropyl phosphate + L-glutamate. The protein operates within amino-acid biosynthesis; L-histidine biosynthesis; L-histidine from 5-phospho-alpha-D-ribose 1-diphosphate: step 7/9. This chain is Histidinol-phosphate aminotransferase, found in Geotalea uraniireducens (strain Rf4) (Geobacter uraniireducens).